Here is a 289-residue protein sequence, read N- to C-terminus: Homeobox protein engrailed-2 (289 aa).

Basic and acidic residues-rich tracts occupy residues 1–12 (MEEGGRSPREEA) and 60–83 (EFGR…ESRR). Disordered stretches follow at residues 1–166 (MEEG…GNQP) and 179–206 (SDRP…PRTA). Over residues 96-114 (VPGGGGGGGGGSPGRGEGG) the composition is skewed to gly residues. Over residues 142 to 160 (LSGAELSVSSDSDSSQAGS) the composition is skewed to low complexity. The homeobox DNA-binding region spans 200–259 (DKRPRTAFTAEQLQRLKAEFQTNRYLTEQRRQSLAQELGLNESQIKIWFQNKRAKIKKAT).

Belongs to the engrailed homeobox family.

Its subcellular location is the nucleus. This is Homeobox protein engrailed-2 (EN2) from Gallus gallus (Chicken).